A 277-amino-acid polypeptide reads, in one-letter code: Eukaryotic translation initiation factor 3 subunit J (277 aa).

The segment at 1–80 (MSWDDEDFAV…PAATKNTMLD (80 aa)) is disordered. Residues 23-43 (WDDEFAENDDEPVLESWEDEE) are compositionally biased toward acidic residues. A compositionally biased stretch (low complexity) spans 50–75 (KAAAAAAAKAPKKASPSPAATPAATK). Positions 199 to 230 (TVENIRQTIATLNVLMKDKEREERQARLAKVK) form a coiled coil. The disordered stretch occupies residues 257 to 277 (DNDFDLGGNDNFDDFGEDDFM). Residues 267 to 277 (NFDDFGEDDFM) show a composition bias toward acidic residues.

Belongs to the eIF-3 subunit J family. Component of the eukaryotic translation initiation factor 3 (eIF-3) complex.

The protein resides in the cytoplasm. Component of the eukaryotic translation initiation factor 3 (eIF-3) complex, which is involved in protein synthesis of a specialized repertoire of mRNAs and, together with other initiation factors, stimulates binding of mRNA and methionyl-tRNAi to the 40S ribosome. The eIF-3 complex specifically targets and initiates translation of a subset of mRNAs involved in cell proliferation. In Kluyveromyces lactis (strain ATCC 8585 / CBS 2359 / DSM 70799 / NBRC 1267 / NRRL Y-1140 / WM37) (Yeast), this protein is Eukaryotic translation initiation factor 3 subunit J.